Reading from the N-terminus, the 117-residue chain is Pre-mRNA-splicing factor ini1 (117 aa).

It belongs to the PHF5 family.

It is found in the nucleus. Required for pre-mRNA splicing. This chain is Pre-mRNA-splicing factor ini1 (ini1), found in Schizosaccharomyces pombe (strain 972 / ATCC 24843) (Fission yeast).